A 585-amino-acid chain; its full sequence is Phosphomethylpyrimidine synthase (585 aa).

Over residues 89-107 (RGDTESYEGRHVKPEDNGY) the composition is skewed to basic and acidic residues. The interval 89–116 (RGDTESYEGRHVKPEDNGYRSRNGSHQH) is disordered. Substrate-binding positions include Asn199, Met228, Tyr257, His293, 313–315 (SRG), 354–357 (DGLR), and Glu393. Residue His397 coordinates Zn(2+). Tyr420 serves as a coordination point for substrate. His461 lines the Zn(2+) pocket. Residues Cys541, Cys544, and Cys549 each contribute to the [4Fe-4S] cluster site.

The protein belongs to the ThiC family. The cofactor is [4Fe-4S] cluster.

The enzyme catalyses 5-amino-1-(5-phospho-beta-D-ribosyl)imidazole + S-adenosyl-L-methionine = 4-amino-2-methyl-5-(phosphooxymethyl)pyrimidine + CO + 5'-deoxyadenosine + formate + L-methionine + 3 H(+). It functions in the pathway cofactor biosynthesis; thiamine diphosphate biosynthesis. Catalyzes the synthesis of the hydroxymethylpyrimidine phosphate (HMP-P) moiety of thiamine from aminoimidazole ribotide (AIR) in a radical S-adenosyl-L-methionine (SAM)-dependent reaction. The protein is Phosphomethylpyrimidine synthase of Bacillus pumilus (strain SAFR-032).